The primary structure comprises 332 residues: GDP-mannose transporter 2 (332 aa).

The Cytoplasmic segment spans residues 1 to 12; sequence MSSLKVSQQDKK. Residues 13–33 form a helical membrane-spanning segment; the sequence is WVNSGSVAILAYCASSILMTI. Over 34-47 the chain is Lumenal; sequence TNKVVMSDRTFNMN. A helical membrane pass occupies residues 48-68; the sequence is FLLLFIQSLVCVITLLVLKVL. Over 69 to 84 the chain is Cytoplasmic; that stretch reads GSVNFRSFNKTDARNW. A helical transmembrane segment spans residues 85-105; that stretch reads FPISICLVLMIFTSSKSLQYL. The Lumenal segment spans residues 106–108; that stretch reads SVP. A helical membrane pass occupies residues 109 to 129; that stretch reads VYTIFKNLTIIVIAYGEVLFF. Topologically, residues 130–131 are cytoplasmic; sequence GS. Residues 132–152 traverse the membrane as a helical segment; it reads SVGNMELGSFALMIVSSLIAA. Topologically, residues 153–174 are lumenal; sequence HGDYLHSVERLKKMLGPNVSFS. N170 carries N-linked (GlcNAc...) asparagine glycosylation. Residues 175–195 form a helical membrane-spanning segment; the sequence is FIVNIGYFWIAANCFASALFV. Residues 196-211 are Cytoplasmic-facing; sequence LLMRKRIQVTNFKDFD. A helical transmembrane segment spans residues 212–232; the sequence is TMFYNNVLSLPLLLLGSYLFE. At 233-248 the chain is on the lumenal side; it reads DWSQENLLPHVDIDNL. Residue N247 is glycosylated (N-linked (GlcNAc...) asparagine). A helical transmembrane segment spans residues 249–269; the sequence is STMIISGLASVAISYCSGWCV. At 270-274 the chain is on the cytoplasmic side; sequence RVTSS. Residues 275–295 form a helical membrane-spanning segment; the sequence is TTYSMVGALNKLPIALTGFLF. The Lumenal segment spans residues 296–300; the sequence is NDAAR. A helical transmembrane segment spans residues 301–321; it reads NLSSAASILLGFASGIIYAVA. Topologically, residues 322–332 are cytoplasmic; it reads KQKKLQNSEKI.

Belongs to the TPT transporter family. SLC35D subfamily. As to quaternary structure, homooligomer.

The protein localises to the golgi apparatus membrane. It is found in the cytoplasmic vesicle membrane. The protein resides in the endoplasmic reticulum membrane. Involved in the import of GDP-mannose from the cytoplasm into the Golgi lumen. The polypeptide is GDP-mannose transporter 2 (VRG4-2) (Vanderwaltozyma polyspora (strain ATCC 22028 / DSM 70294 / BCRC 21397 / CBS 2163 / NBRC 10782 / NRRL Y-8283 / UCD 57-17) (Kluyveromyces polysporus)).